The following is a 166-amino-acid chain: Large ribosomal subunit protein uL10 (166 aa).

The protein belongs to the universal ribosomal protein uL10 family. In terms of assembly, part of the ribosomal stalk of the 50S ribosomal subunit. The N-terminus interacts with L11 and the large rRNA to form the base of the stalk. The C-terminus forms an elongated spine to which L12 dimers bind in a sequential fashion forming a multimeric L10(L12)X complex.

Its function is as follows. Forms part of the ribosomal stalk, playing a central role in the interaction of the ribosome with GTP-bound translation factors. The chain is Large ribosomal subunit protein uL10 from Shewanella baltica (strain OS223).